Consider the following 457-residue polypeptide: Probable ECA polymerase (457 aa).

11 consecutive transmembrane segments (helical) span residues 3 to 23 (LLQFAGLLLVWLVCGGFILTL), 41 to 61 (MLFLLTFFFGFPLTCILVFGF), 65 to 85 (VVPAEYLLQALLSAGCFYAIY), 118 to 138 (IMALVALITVSVFFLHNGFLL), 154 to 174 (GVALKRFFYFFIPAMLVVYFL), 181 to 201 (WLLFLVGTVAFGLLTYAIVGG), 206 to 226 (IIIAFALFLFIGIIRGWITLW), 227 to 247 (MLALAGVGAIVAMFWLALKRY), 340 to 360 (LVVMGGALFIMLGAVMVGLII), 377 to 397 (YKAAILQSFCFGAVFNMIVLA), and 408 to 428 (VVFFCVIFAACVLVAKLLYWL).

This sequence belongs to the WzyE family. As to quaternary structure, probably part of a complex composed of WzxE, WzyE and WzzE.

Its subcellular location is the cell inner membrane. It functions in the pathway bacterial outer membrane biogenesis; enterobacterial common antigen biosynthesis. Its function is as follows. Probably involved in the polymerization of enterobacterial common antigen (ECA) trisaccharide repeat units. The protein is Probable ECA polymerase of Erwinia tasmaniensis (strain DSM 17950 / CFBP 7177 / CIP 109463 / NCPPB 4357 / Et1/99).